The sequence spans 285 residues: Glutamate racemase (285 aa).

Substrate-binding positions include 28–29 (DS) and 60–61 (YG). The Proton donor/acceptor role is filled by Cys-92. Substrate is bound at residue 93–94 (NT). The Proton donor/acceptor role is filled by Cys-204. 205–206 (TH) lines the substrate pocket.

This sequence belongs to the aspartate/glutamate racemases family.

The catalysed reaction is L-glutamate = D-glutamate. It participates in cell wall biogenesis; peptidoglycan biosynthesis. In terms of biological role, provides the (R)-glutamate required for cell wall biosynthesis. The protein is Glutamate racemase of Escherichia coli O9:H4 (strain HS).